A 1111-amino-acid polypeptide reads, in one-letter code: MGRVSFNVRVSSVRRARCSCPGRCYLSCRVPPTTALHALNGFGRAGVLGETAGGTVGLGPSGTRGFLSGSKFQASGSLKDCFGAPPAPDVLRADSSVGEGCPQKLVTANLLRFLLLVLIPCICALIVLLAILLSFVGTLKKVYFKSNDSEPLVTDGEVRVPGVIHVNRYENTGAPSMPPSQSIPAWTPRAPSLEDQSHGNTSTCVNITHRQCQILPYHSTLAPLLPIVKNMDTEKFLKFFTYLHRLGCYQHILLFGCSLAFPKCIVDGDDRHGLLPCRSFCEAAKEGCESVLGMVNSSWPDSLRCSQFRYHTENNSDASRICFSLQQEHGKQSLCGGGESFLCTSGLCISKKLQCNGYNDCDDWSDEAHCNCSEDLFHCGTGKCLHHSLVCDGYDDCGDLSDEQNCDCNLTKEHRCGDGRCIAAEWVCDGDHDCVDKSDEVNCSCPSQGLVECRSGQCIPSTFQCDGDEDCKDGSDEENCSDRPTPCPGGDRGCLDSSCVESCAGSSLCDSDSSLSNCSHCEPITLELCMNLPYNLTHYPNYLGHRTQKEASISWESALFPALVQTNCYKYLMFFACTILVPKCDVNTGQRVPPCRLLCEHSKERCESVLGIVGLQWPEDTDCSQFPEQSSDNQTCLLPNEDVEECSPSHFKCRSGRCVLGSRRCDGQADCDDDSDEENCGCKERDLWECPLNKQCLKHTLICDGFPDCSDSMDEKNCSFCQDDELECANHECVPRDLWCDGWTDCSDSSDEWGCVTLSKNGNSSSFLTVHRSARDHHVCADGWQETLSQLACRQMGLGEPSVTELVQGQEGQQWLRLHSSWENLNGSTLQELLVHRRSCPSGSEISLLCTKQDCGRRPAARMNKRILGGRTSRPGRWPWQCSLQSEPSGHICGCVLIAKKWVLTVAHCFEGREDADVWKVVFGINNLDHPSGFMQTRFVKTILLHPRYSRAVVDYDISVVELSDDINETSYVRPVCLPSPREFLEPDTYCYITGWGHMGNKMPFKLQEGEVRIIPLEQCQSYFDMKTITNRMICAGYESGTVDSCMIDSGGPLVCERPGGQWTLFGLTSWGSVCFSKVLGPGVYSNVSYFVDWIERQIYIQTFLQKKSQG.

Residues 1-112 (MGRVSFNVRV…QKLVTANLLR (112 aa)) are Cytoplasmic-facing. The short motif at 93–96 (ADSS) is the DDNN motif element. A helical; Signal-anchor for type II membrane protein membrane pass occupies residues 113 to 133 (FLLLVLIPCICALIVLLAILL). Topologically, residues 134 to 1111 (SFVGTLKKVY…QTFLQKKSQG (978 aa)) are extracellular. N147 carries N-linked (GlcNAc...) asparagine glycosylation. The 127-residue stretch at 199 to 325 (GNTSTCVNIT…SDASRICFSL (127 aa)) folds into the FZ 1 domain. 31 disulfides stabilise this stretch: C204–C264, C212–C257, C248–C288, C277–C322, C281–C305, C335–C348, C343–C361, C355–C370, C372–C384, C379–C397, C391–C406, C408–C421, C416–C434, C428–C443, C445–C458, C453–C471, C465–C480, C521–C584, C529–C577, C568–C606, C595–C636, C599–C623, C646–C658, C653–C671, C665–C680, C682–C696, C690–C709, C703–C718, C721–C733, C728–C746, and C740–C755. N296 carries an N-linked (GlcNAc...) asparagine glycan. 4 LDL-receptor class A domains span residues 334–371 (LCGG…AHCN), 371–407 (NCSE…QNCD), 407–444 (DCNL…VNCS), and 444–481 (SCPS…ENCS). Residue N409 is glycosylated (N-linked (GlcNAc...) asparagine). Positions 516 to 639 (SNCSHCEPIT…SSDNQTCLLP (124 aa)) constitute an FZ 2 domain. N-linked (GlcNAc...) asparagine glycosylation is present at N535. LDL-receptor class A domains lie at 645-681 (ECSP…ENCG), 681-719 (GCKE…KNCS), and 720-756 (FCQD…WGCV). The SRCR domain maps to 756 to 851 (VTLSKNGNSS…SGSEISLLCT (96 aa)). N763 carries N-linked (GlcNAc...) asparagine glycosylation. Disulfide bonds link C855–C977, C893–C909, C991–C1056, and C1020–C1035. The Peptidase S1 domain occupies 867–1100 (ILGGRTSRPG…FVDWIERQIY (234 aa)). Residues H908 and D957 each act as charge relay system in the active site. S1050 acts as the Charge relay system in catalysis.

The protein belongs to the peptidase S1 family. N-glycosylated; required for processing and activation. Post-translationally, activated through proteolytic processing by a trypsin-like protease; cleaved into a N-terminal propeptide and an activated corin protease fragment. Atrial natriuretic peptide-converting enzyme, 180 kDa soluble fragment is produced by cleavage by ADAM10. Cleavage by ADAM10 to produce soluble 180 kDa soluble fragment takes place after the transmembrane region and before FZ 1. In terms of processing, a disulfide bond links the activated corin protease fragment and the N-terminal propeptide. The disulfide bond also links the activated corin protease fragment with Atrial natriuretic peptide-converting enzyme, 180 kDa soluble fragment. In terms of tissue distribution, specifically expressed in heart. Also detected in kidney, aorta, brain and testis. In kidney, present in epithelial cells, with segmental expression in the proximal tubule, thick ascending limb, connecting tubule, and throughout the collecting duct (at protein level).

It localises to the cell membrane. The protein localises to the cytoplasmic vesicle. Its subcellular location is the secreted. In terms of biological role, serine-type endopeptidase involved in atrial natriuretic peptide (NPPA) processing. Converts through proteolytic cleavage the non-functional propeptide NPPA into the active hormone, thereby regulating blood pressure in heart and promoting natriuresis, diuresis and vasodilation. Proteolytic cleavage of pro-NPPA also plays a role in female pregnancy by promoting trophoblast invasion and spiral artery remodeling in uterus. Also acts as a regulator of sodium reabsorption in kidney. May also process pro-NPPB the B-type natriuretic peptide. The sequence is that of Atrial natriuretic peptide-converting enzyme (Corin) from Rattus norvegicus (Rat).